Here is a 194-residue protein sequence, read N- to C-terminus: 7-methyl-GTP pyrophosphatase (194 aa).

Residue aspartate 69 is the Proton acceptor of the active site.

Belongs to the Maf family. YceF subfamily. A divalent metal cation serves as cofactor.

It is found in the cytoplasm. The enzyme catalyses N(7)-methyl-GTP + H2O = N(7)-methyl-GMP + diphosphate + H(+). In terms of biological role, nucleoside triphosphate pyrophosphatase that hydrolyzes 7-methyl-GTP (m(7)GTP). May have a dual role in cell division arrest and in preventing the incorporation of modified nucleotides into cellular nucleic acids. In Shigella boydii serotype 4 (strain Sb227), this protein is 7-methyl-GTP pyrophosphatase (yceF1).